We begin with the raw amino-acid sequence, 432 residues long: Adenylosuccinate synthetase (432 aa).

GTP contacts are provided by residues 13 to 19 and 41 to 43; these read GDEGKGK and GHT. Aspartate 14 serves as the catalytic Proton acceptor. 2 residues coordinate Mg(2+): aspartate 14 and glycine 41. IMP-binding positions include 14 to 17, 39 to 42, threonine 130, arginine 144, glutamine 225, threonine 240, and arginine 304; these read DEGK and NAGH. The active-site Proton donor is the histidine 42. Residue 300-306 coordinates substrate; sequence ATTGRRR. GTP is bound by residues arginine 306, 332–334, and 415–417; these read KLD and STG.

It belongs to the adenylosuccinate synthetase family. As to quaternary structure, homodimer. Requires Mg(2+) as cofactor.

It is found in the cytoplasm. The catalysed reaction is IMP + L-aspartate + GTP = N(6)-(1,2-dicarboxyethyl)-AMP + GDP + phosphate + 2 H(+). Its pathway is purine metabolism; AMP biosynthesis via de novo pathway; AMP from IMP: step 1/2. Its function is as follows. Plays an important role in the de novo pathway of purine nucleotide biosynthesis. Catalyzes the first committed step in the biosynthesis of AMP from IMP. This Serratia proteamaculans (strain 568) protein is Adenylosuccinate synthetase.